The primary structure comprises 185 residues: Ribosome-recycling factor (185 aa).

The protein belongs to the RRF family.

It is found in the cytoplasm. In terms of biological role, responsible for the release of ribosomes from messenger RNA at the termination of protein biosynthesis. May increase the efficiency of translation by recycling ribosomes from one round of translation to another. This Azoarcus sp. (strain BH72) protein is Ribosome-recycling factor.